Here is a 151-residue protein sequence, read N- to C-terminus: Ribosome maturation factor RimP (151 aa).

The protein belongs to the RimP family.

The protein localises to the cytoplasm. Functionally, required for maturation of 30S ribosomal subunits. This Shewanella woodyi (strain ATCC 51908 / MS32) protein is Ribosome maturation factor RimP.